A 197-amino-acid polypeptide reads, in one-letter code: Casparian strip membrane protein 4 (197 aa).

At 1-34 the chain is on the cytoplasmic side; it reads MMSSTTIDVPAESSNVAKGKAVLVAAPRPGGWKK. Residues 35-55 form a helical membrane-spanning segment; sequence GIAIVDFVLRLGAVAAALGAA. Residues 56-85 lie on the Extracellular side of the membrane; it reads TTMATADQTLPFFTQFFQFEASYDSFTTFQ. A helical membrane pass occupies residues 86–106; the sequence is FFVITMALVGCYLVLSLPLSI. Over 107–118 the chain is Cytoplasmic; it reads VSIIRPHALGPK. Residues 119-139 form a helical membrane-spanning segment; that stretch reads LFLIILDTVFLTLATASAASA. Over 140-171 the chain is Extracellular; it reads AAVVYVAHNGNQDSNWLAICNQFGDFCAQTSG. A helical transmembrane segment spans residues 172-192; the sequence is AVVSSLVAVVVFVLLIVMSAL. Topologically, residues 193 to 197 are cytoplasmic; it reads ALGKH.

It belongs to the Casparian strip membrane proteins (CASP) family. Homodimer and heterodimers.

Its subcellular location is the cell membrane. Regulates membrane-cell wall junctions and localized cell wall deposition. Required for establishment of the Casparian strip membrane domain (CSD) and the subsequent formation of Casparian strips, a cell wall modification of the root endodermis that determines an apoplastic barrier between the intraorganismal apoplasm and the extraorganismal apoplasm and prevents lateral diffusion. In Lotus japonicus (Lotus corniculatus var. japonicus), this protein is Casparian strip membrane protein 4.